A 230-amino-acid polypeptide reads, in one-letter code: Voltage-gated hydrogen channel 1 (230 aa).

The Cytoplasmic segment spans residues 1 to 58 (MAGCLRHFTSVGDDTKKKAWKEEDVEVAHEEEPKNTPHPFIASYSFRGALKWLFSSHK). Residues 59 to 79 (FQIVIICLVILDALFVLVEVL) form a helical membrane-spanning segment. Residues 80–96 (LDLELLAEKVDHIIPEI) lie on the Extracellular side of the membrane. A helical membrane pass occupies residues 97–119 (FHYLSISVLSFFILEIAGKLYAF). Residues 120–127 (RLEFFHHK) are Cytoplasmic-facing. Residues 128 to 148 (FEVFDAAIVVISFIIDIVYIS) traverse the membrane as a helical segment. Residues 149-155 (REDIFNA) lie on the Extracellular side of the membrane. The chain crosses the membrane as a helical span at residues 156–176 (VGLLILLRLWRVARIVNGIIV). Residues 177 to 226 (SVKTQAEDKIHRLKENQESLLEKVAHLEQQCAQQEQEIVRLQTLLQQHNV) are a coiled coil. Over 177-230 (SVKTQAEDKIHRLKENQESLLEKVAHLEQQCAQQEQEIVRLQTLLQQHNVFPAS) the chain is Cytoplasmic.

The protein belongs to the hydrogen channel family. As to quaternary structure, homodimer.

The protein resides in the membrane. It is found in the cell membrane. In terms of biological role, mediates the voltage-dependent proton permeability of excitable membranes. Forms a proton-selective channel through which protons may pass in accordance with their electrochemical gradient. This Xenopus tropicalis (Western clawed frog) protein is Voltage-gated hydrogen channel 1 (hvcn1).